The chain runs to 136 residues: UPF0310 protein HH_1062 (136 aa).

It belongs to the UPF0310 family.

This is UPF0310 protein HH_1062 from Helicobacter hepaticus (strain ATCC 51449 / 3B1).